We begin with the raw amino-acid sequence, 659 residues long: Polyamine transporter 4 (659 aa).

Composition is skewed to polar residues over residues 1–20 (MPSS…NIQQ) and 28–45 (NVTN…TGSI). The segment at 1–81 (MPSSLTKTES…LDWDGPDDPD (81 aa)) is disordered. The Cytoplasmic portion of the chain corresponds to 1–99 (MPSSLTKTES…KKWYTTMTSA (99 aa)). A helical transmembrane segment spans residues 100–120 (FLCLVVTMGSSLYVSSVPELV). The Extracellular segment spans residues 121 to 128 (ERYHVSQT). The chain crosses the membrane as a helical span at residues 129–149 (LALAGLTFYLLGLSTVIGAPL). Topologically, residues 150-157 (SEVFGRKP) are cytoplasmic. Residues 158 to 178 (VYLFSLPVSMLFTMGVGLSNG) form a helical membrane-spanning segment. Topologically, residues 179–187 (HMRIILPLR) are extracellular. A helical transmembrane segment spans residues 188–208 (FLSGVFASPALSVGSGTILDI). At 209–215 (FDVDQVS) the chain is on the cytoplasmic side. Residues 216–236 (VAMTYFVLSPFLGPVLSPIMA) traverse the membrane as a helical segment. Over 237-246 (GFATEAKGWR) the chain is Extracellular. Residues 247–267 (WSEWIQLIAGGLILPFIALMP) traverse the membrane as a helical segment. Over 268–316 (ETHKGIILRKRAKKRNIALKKFSREAQKEFLKTTVTITILRPLKMLVVE) the chain is Cytoplasmic. The chain crosses the membrane as a helical span at residues 317 to 337 (PIVFVFSVYVAFIFAILFGFF). Residues 338 to 355 (EAYAVIYRGVYHMSMGIS) are Extracellular-facing. Residues 356–376 (GLPFIGIGVGLWIGAFFYLYI) traverse the membrane as a helical segment. Over 377–423 (DRKYLFPKPPAGTQPLTEKERTSKRTTPYRGARDAETGELLPVVPEK) the chain is Cytoplasmic. Residues 387-408 (AGTQPLTEKERTSKRTTPYRGA) are disordered. A helical membrane pass occupies residues 424 to 444 (FLIACKFGSVALPIGLFWQAW). Residues 445–456 (TARSDVHWMAPV) are Extracellular-facing. A helical transmembrane segment spans residues 457-477 (AAGVPFGFGLILIFFSVLMYF). At 478-486 (STCYPPLTV) the chain is on the cytoplasmic side. Residues 487–509 (ASCLAANNLLRYVMSSVFPLFTI) form a helical membrane-spanning segment. Topologically, residues 510–518 (QMYTKMKIK) are extracellular. Residues 519–539 (WASTLFALVCVVMIPIPWVFE) form a helical membrane-spanning segment. The Cytoplasmic portion of the chain corresponds to 540 to 659 (KWGSKLRHKS…MATDASARMV (120 aa)). Residues 587 to 602 (METDPSTREKPGERLS) are compositionally biased toward basic and acidic residues. A disordered region spans residues 587-631 (METDPSTREKPGERLSLRRTHTQPVPASFDREDGQHAQNRNEPIS). A phosphothreonine mark is found at Thr589, Thr606, and Thr608. Residues 622–631 (HAQNRNEPIS) are compositionally biased toward polar residues. A phosphoserine mark is found at Ser633 and Ser646.

It belongs to the major facilitator superfamily. DHA1 family. Polyamines/proton antiporter (TC 2.A.1.2.16) subfamily.

It localises to the cell membrane. Cell membrane polyamine/proton antiporter, involved in the detoxification of excess polyamines in the cytoplasm. Recognizes spermidine, spermine and the antimalarial drug quinidine, but not quinine, chloroquine and mefloquine. This is Polyamine transporter 4 (TPO4) from Saccharomyces cerevisiae (strain ATCC 204508 / S288c) (Baker's yeast).